A 141-amino-acid polypeptide reads, in one-letter code: Large ribosomal subunit protein uL16 (141 aa).

Positions 1–17 (MLQPKRTKYRKVQKGKM) are enriched in basic residues. Residues 1-29 (MLQPKRTKYRKVQKGKMKGNSQRGHELSN) form a disordered region.

Belongs to the universal ribosomal protein uL16 family. Part of the 50S ribosomal subunit.

Functionally, binds 23S rRNA and is also seen to make contacts with the A and possibly P site tRNAs. This chain is Large ribosomal subunit protein uL16, found in Flavobacterium psychrophilum (strain ATCC 49511 / DSM 21280 / CIP 103535 / JIP02/86).